Consider the following 452-residue polypeptide: GTPase Der (452 aa).

EngA-type G domains lie at 4–169 (PIVA…PTTE) and 177–352 (IKVA…ASHR). GTP contacts are provided by residues 10–17 (GRPNVGKS), 57–61 (DTGGL), 120–123 (NKCE), 183–190 (GRPNVGKS), 230–234 (DTAGI), and 295–298 (NKWD). One can recognise a KH-like domain in the interval 353-438 (RRVSTAVINE…PIRLIWRGKS (86 aa)).

It belongs to the TRAFAC class TrmE-Era-EngA-EngB-Septin-like GTPase superfamily. EngA (Der) GTPase family. In terms of assembly, associates with the 50S ribosomal subunit.

Functionally, GTPase that plays an essential role in the late steps of ribosome biogenesis. This chain is GTPase Der, found in Gloeothece citriformis (strain PCC 7424) (Cyanothece sp. (strain PCC 7424)).